A 2543-amino-acid polypeptide reads, in one-letter code: Polyketide synthase PksR (2543 aa).

Residues 165 to 269 are methyltransferase; that stretch reads LEIGAGTGGT…KAVLKKNGLL (105 aa). Residues 376 to 452 form the Carrier 1 domain; it reads SLIEQTAQFV…ELVEYLVKGH (77 aa). Serine 413 carries the post-translational modification O-(pantetheine 4'-phosphoryl)serine. The disordered stretch occupies residues 465-485; the sequence is TKPAKNEAPLQTERTDPNKPF. The Ketosynthase family 3 (KS3) 1 domain maps to 527-959; it reads TEDIAIIGVS…GAYANLIIEE (433 aa). The active-site For beta-ketoacyl synthase 1 activity is the cysteine 700. The N-terminal hotdog fold stretch occupies residues 1114 to 1242; that stretch reads HFDVSSINEK…GQCGIGSFEP (129 aa). In terms of domain architecture, PKS/mFAS DH spans 1114 to 1397; sequence HFDVSSINEK…LKQLRISNQR (284 aa). The interval 1255–1397 is C-terminal hotdog fold; sequence TKLHHIDQMY…LKQLRISNQR (143 aa). The Carrier 2 domain occupies 1407–1485; that stretch reads SNLKARIRSY…ELIDFFADKH (79 aa). Serine 1445 is subject to O-(pantetheine 4'-phosphoryl)serine. One can recognise a Ketosynthase family 3 (KS3) 2 domain in the interval 1528–1946; that stretch reads ADGIAIIGMS…GVNAHVILEE (419 aa). Active-site for beta-ketoacyl synthase 2 activity residues include cysteine 1680, histidine 1815, and histidine 1862. Residues 2134-2208 form the Carrier 3 domain; it reads RINNSSDHHI…DMMDLIAKKQ (75 aa). Residue serine 2168 is modified to O-(pantetheine 4'-phosphoryl)serine. The tract at residues 2234-2514 is thioesterase; that stretch reads RPVFWFHGGV…EFCEKLYSNR (281 aa).

Pantetheine 4'-phosphate serves as cofactor.

Its subcellular location is the cytoplasm. It participates in antibiotic biosynthesis; bacillaene biosynthesis. In terms of biological role, involved in some intermediate steps for the synthesis of the antibiotic polyketide bacillaene which is involved in secondary metabolism. The sequence is that of Polyketide synthase PksR (pksR) from Bacillus subtilis (strain 168).